The following is a 1606-amino-acid chain: Phosphatidylinositol 3,4,5-trisphosphate-dependent Rac exchanger 2 protein (1606 aa).

Residues 23–214 (LRVCVLSELQ…KAVCSNINEA (192 aa)) enclose the DH domain. In terms of domain architecture, PH spans 245–361 (EMLMCGVLLK…WFEAILKERE (117 aa)). 2 consecutive DEP domains span residues 390–464 (CRQG…RFRY) and 491–566 (SLFT…FFSD). PDZ domains lie at 592 to 671 (KSLL…VLVS) and 677 to 754 (TVKI…QDSI). Residues 1581–1606 (GVRDRTPQSAPRLYKLCEPPPPAGEE) are disordered.

In terms of assembly, interacts with RAC1. As to expression, isoform 1 is highly expressed in skeletal muscle, heart and placenta, absent from peripheral blood leukocytes. Isoform 2 is expressed in skeletal muscle, kidney, small intestine, and placenta. Isoform 3 is expressed in the heart.

Functions as a RAC1 guanine nucleotide exchange factor (GEF), activating Rac proteins by exchanging bound GDP for free GTP. Its activity is synergistically activated by phosphatidylinositol 3,4,5-trisphosphate and the beta gamma subunits of heterotrimeric G protein. Mediates the activation of RAC1 in a PI3K-dependent manner. May be an important mediator of Rac signaling, acting directly downstream of both G protein-coupled receptors and phosphoinositide 3-kinase. The protein is Phosphatidylinositol 3,4,5-trisphosphate-dependent Rac exchanger 2 protein of Homo sapiens (Human).